The sequence spans 255 residues: Homeobox-leucine zipper protein ATHB-23 (255 aa).

The segment at residues 68 to 127 is a DNA-binding region (homeobox); it reads MGEKKRRLNMEQLKALEKDFELGNKLESDRKLELARALGLQPRQIAIWFQNRRARSKTKQ. Residues 128 to 163 form a leucine-zipper region; that stretch reads LEKDYDMLKRQFESLRDENEVLQTQNQKLQAQVMAL.

Belongs to the HD-ZIP homeobox family. Class I subfamily. In terms of tissue distribution, expressed in young leaves, in the adaxial domain of leaf primordia and the rib meristem. Expressed in the styles of flowers and siliques.

It is found in the nucleus. In terms of biological role, probable transcription factor. This is Homeobox-leucine zipper protein ATHB-23 (ATHB-23) from Arabidopsis thaliana (Mouse-ear cress).